Reading from the N-terminus, the 299-residue chain is Homeobox protein ceh-24 (299 aa).

Residues 1–35 show a composition bias toward basic and acidic residues; the sequence is MSEKETPSPVLDVKKEKNEETGIDEEKSSEDDCSK. Disordered regions lie at residues 1-45 and 208-263; these read MSEK…NPSK and QEKE…SGVF. Residues 150–209 constitute a DNA-binding region (homeobox); the sequence is RRKRRVLFSQAQVYELERRFKQAKYLTAPEREQLANSIRLTPTQVKIWFQNHRYKCKRQE. Over residues 242–252 the composition is skewed to acidic residues; the sequence is DDKDDEEEEES.

It belongs to the NK-2 homeobox family. Expressed in the 8 vulval muscles, 8-10 ventral neurons in the head and in the most posterior pharyngeal muscle cell, m8. Expressed in SIA, SIB and SMB sublateral motor neurons, and in muscles of the pharynx and vulva.

Its subcellular location is the nucleus. Probable transcriptional regulator that is required in neural development for the normal formation of sublateral cholinergic motor neuron processes. Plays a role in regulating the expression of acetylcholine transporter protein unc-17 in the sublateral processes. In particular, it is required in sublateral motor neurons for a left-right turning behavior that occurs during the lethargus phase of the normal sleep process called 'flipping'. During 'flipping' animals rotate 180 degrees about their longitudinal axis. The protein is Homeobox protein ceh-24 of Caenorhabditis elegans.